Here is a 636-residue protein sequence, read N- to C-terminus: PTS system beta-glucoside-specific EIIBCA component (636 aa).

Residues 1-86 enclose the PTS EIIB type-1 domain; that stretch reads MKYEQLAKDI…VEIGGFQNQA (86 aa). Cysteine 26 (phosphocysteine intermediate; for EIIB activity) is an active-site residue. Transmembrane regions (helical) follow at residues 104 to 124, 146 to 166, 172 to 192, 215 to 235, 258 to 278, 299 to 319, 337 to 357, 369 to 389, 407 to 427, and 444 to 464; these read IDII…TGMI, LLHA…GYTA, ATPF…LVVL, FLGI…IILA, LVPF…IGPI, IIAG…GLHW, VLAM…AVWL, VPAF…GVTL, AIIG…IFGI, and IVIA…LFGL. The 372-residue stretch at 105–476 folds into the PTS EIIC type-1 domain; it reads DIIASIFTPV…GNASDEQTET (372 aa). The disordered stretch occupies residues 472–492; sequence EQTETKAHTSTGTGEKEEISS. The 105-residue stretch at 506-610 folds into the PTS EIIA type-1 domain; the sequence is DEAFSSGALG…AVTTPVIVTN (105 aa). Histidine 558 serves as the catalytic Tele-phosphohistidine intermediate; for EIIA activity.

The protein localises to the cell membrane. Functionally, the phosphoenolpyruvate-dependent sugar phosphotransferase system (sugar PTS), a major carbohydrate active -transport system, catalyzes the phosphorylation of incoming sugar substrates concomitantly with their translocation across the cell membrane. This system is involved in beta-glucoside transport. The polypeptide is PTS system beta-glucoside-specific EIIBCA component (bglP) (Halalkalibacterium halodurans (strain ATCC BAA-125 / DSM 18197 / FERM 7344 / JCM 9153 / C-125) (Bacillus halodurans)).